We begin with the raw amino-acid sequence, 508 residues long: Photosystem II CP47 reaction center protein (508 aa).

The next 6 helical transmembrane spans lie at 21–36 (SVHI…WAGS), 101–115 (IVFS…IWHW), 140–156 (GIHL…FGAF), 203–218 (IAAG…FHLS), 237–252 (VLSS…AFIV), and 457–472 (SFAL…HGAR).

Belongs to the PsbB/PsbC family. PsbB subfamily. In terms of assembly, PSII is composed of 1 copy each of membrane proteins PsbA, PsbB, PsbC, PsbD, PsbE, PsbF, PsbH, PsbI, PsbJ, PsbK, PsbL, PsbM, PsbT, PsbX, PsbY, PsbZ, Psb30/Ycf12, at least 3 peripheral proteins of the oxygen-evolving complex and a large number of cofactors. It forms dimeric complexes. The cofactor is Binds multiple chlorophylls. PSII binds additional chlorophylls, carotenoids and specific lipids..

It is found in the plastid. The protein localises to the chloroplast thylakoid membrane. In terms of biological role, one of the components of the core complex of photosystem II (PSII). It binds chlorophyll and helps catalyze the primary light-induced photochemical processes of PSII. PSII is a light-driven water:plastoquinone oxidoreductase, using light energy to abstract electrons from H(2)O, generating O(2) and a proton gradient subsequently used for ATP formation. In Amborella trichopoda, this protein is Photosystem II CP47 reaction center protein.